We begin with the raw amino-acid sequence, 1051 residues long: Lateral signaling target protein 2 homolog (1051 aa).

4 disordered regions span residues 305-440 (PLGS…DEDL), 516-552 (GSNA…PSTS), 566-703 (HLPS…NASS), and 837-968 (IDLA…DGKA). Residues 319-358 (NNTSSSTSNNNNNNNNNSSSSSSSSSGSGSNTAKTSTSST) show a composition bias toward low complexity. Basic and acidic residues predominate over residues 360–370 (KAVERLVDHRN). The span at 371 to 391 (NNSSTVAGATQPSTARSPSML) shows a compositional bias: polar residues. Composition is skewed to low complexity over residues 392–401 (SLSAGSTPTA) and 409–428 (PSHS…NPPA). The span at 518-528 (NAATERQQQQQ) shows a compositional bias: polar residues. 2 stretches are compositionally biased toward low complexity: residues 533-549 (LQPG…QDEP) and 568-582 (PSSS…SSNQ). Phosphoserine is present on residues S569 and S570. A compositionally biased stretch (polar residues) spans 583–596 (QTTIKTPNGNQSMP). Residues 597 to 606 (NSSSSSSNHN) show a composition bias toward low complexity. Basic residues-rich tracts occupy residues 607 to 637 (NNRH…HPHH) and 650 to 672 (HHHH…ARKR). The span at 692-703 (TPGSADTSNASS) shows a compositional bias: polar residues. Residues 840–852 (ASGNNNGNSNAAA) are compositionally biased toward low complexity. S861 bears the Phosphoserine mark. Low complexity-rich tracts occupy residues 879–924 (QQQQ…SPIS) and 937–960 (SSIG…MSPP). The FYVE-type zinc finger occupies 965–1025 (DGKAPRCMSC…VCRECYVREV (61 aa)). Zn(2+)-binding residues include C971, C974, C987, C990, C995, C998, C1017, and C1020. A disordered region spans residues 1028–1051 (SRQAPAQPSQAHGQASRPQAASAS).

Belongs to the lst-2 family.

Its function is as follows. Negative regulator of epidermal growth factor receptor (EGFR) signaling. This chain is Lateral signaling target protein 2 homolog, found in Drosophila mojavensis (Fruit fly).